A 306-amino-acid chain; its full sequence is Homoserine kinase (306 aa).

90 to 100 (PLARGLGSSAS) serves as a coordination point for ATP.

The protein belongs to the GHMP kinase family. Homoserine kinase subfamily.

The protein resides in the cytoplasm. The catalysed reaction is L-homoserine + ATP = O-phospho-L-homoserine + ADP + H(+). It participates in amino-acid biosynthesis; L-threonine biosynthesis; L-threonine from L-aspartate: step 4/5. Functionally, catalyzes the ATP-dependent phosphorylation of L-homoserine to L-homoserine phosphate. The protein is Homoserine kinase of Staphylococcus epidermidis (strain ATCC 35984 / DSM 28319 / BCRC 17069 / CCUG 31568 / BM 3577 / RP62A).